A 260-amino-acid polypeptide reads, in one-letter code: Small ribosomal subunit protein uS3 (260 aa).

The 76-residue stretch at 39–114 (LRQYIEQKLG…QIRINVVEVQ (76 aa)) folds into the KH type-2 domain. Positions 219 to 260 (EVAAPPPSTRDRDRDRGDRDREPRRRQQQRRRQQFEDRSNEG) are disordered. Composition is skewed to basic and acidic residues over residues 227–243 (TRDR…EPRR) and 251–260 (QQFEDRSNEG).

It belongs to the universal ribosomal protein uS3 family. In terms of assembly, part of the 30S ribosomal subunit. Forms a tight complex with proteins S10 and S14.

In terms of biological role, binds the lower part of the 30S subunit head. Binds mRNA in the 70S ribosome, positioning it for translation. The chain is Small ribosomal subunit protein uS3 from Trichormus variabilis (strain ATCC 29413 / PCC 7937) (Anabaena variabilis).